The following is a 269-amino-acid chain: Propanediol uptake facilitator PduF (269 aa).

The next 2 membrane-spanning stretches (helical) occupy residues 10 to 30 (IAEFLGTGLFLFFGIGCLSAL) and 42 to 62 (ICIIWGLGISLAVYLTAGISG). The short motif at 66–68 (NPA) is the NPA 1 element. Transmembrane regions (helical) follow at residues 69–89 (ITIALWLFACFPGRKVLPYTV), 143–163 (VWQAALVEVVITSILMGMIMA), and 179–199 (LLIGILVAVIGASTGPLTGFA). The short motif at 201 to 203 (NPA) is the NPA 2 element. A helical transmembrane segment spans residues 228 to 248 (IPYFIVPIVAPIIGACAGAAI).

Belongs to the MIP/aquaporin (TC 1.A.8) family.

The protein localises to the cell inner membrane. Its function is as follows. Probably facilitates diffusion of 1,2-propanediol (1,2-PD) into the cell. The chain is Propanediol uptake facilitator PduF from Citrobacter freundii.